The sequence spans 121 residues: Protein MGF 110-5L (121 aa).

An N-terminal signal peptide occupies residues 1–20 (MLVIFLGILGLLANQVSSQL). Asn-62 and Asn-116 each carry an N-linked (GlcNAc...) asparagine; by host glycan.

It belongs to the asfivirus MGF 110 family.

This is Protein MGF 110-5L from African swine fever virus (isolate Portugal/Lis 57/1957) (ASFV).